A 397-amino-acid chain; its full sequence is 42.8 kDa protein in whiE locus (397 aa).

A disordered region spans residues 1 to 22; sequence MTVSPVVATDAPSTDATRTTAT. A compositionally biased stretch (low complexity) spans 8-22; the sequence is ATDAPSTDATRTTAT. Positions 46–137 constitute an ABM domain; the sequence is VRVVLMLDVH…DTHSLRYSVL (92 aa).

Belongs to the SchA/CurD family.

In Streptomyces coelicolor (strain ATCC BAA-471 / A3(2) / M145), this protein is 42.8 kDa protein in whiE locus.